We begin with the raw amino-acid sequence, 311 residues long: Olfactory receptor 6C3 (311 aa).

Over 1–22 (MNHTMVTEFVLLGLSDDPDLQI) the chain is Extracellular. N-linked (GlcNAc...) asparagine glycosylation is present at Asn-2. Residues 23 to 43 (VIFLFLFITYILSVTGNLTII) traverse the membrane as a helical segment. Residues 44-51 (TLTFVDSH) are Cytoplasmic-facing. The helical transmembrane segment at 52–72 (LQTPMYFFLRNFSFLEISFTT) threads the bilayer. At 73–96 (VCIPRFLGAIITRNKTISYNNCAA) the chain is on the extracellular side. Cys-94 and Cys-186 are oxidised to a cystine. Residues 97–117 (QLFFFIFMGVTEFYILTAMSY) form a helical membrane-spanning segment. Residues 118-136 (DRYVAICKPLHYTSIMNRK) lie on the Cytoplasmic side of the membrane. The chain crosses the membrane as a helical span at residues 137-157 (LCTLLVLCAWLSGFLTIFPPL). The Extracellular portion of the chain corresponds to 158–194 (MLLLQLDYCASNVIDHFACDYFPLLQLSCSDTWLLEV). The chain crosses the membrane as a helical span at residues 195–214 (IGFYFALVTLLFTLALVILS). Residues 215–234 (YMYIIRTILRIPSASQRKKA) lie on the Cytoplasmic side of the membrane. A helical membrane pass occupies residues 235–255 (FSTCSSHMIVISISYGSCIFM). The Extracellular portion of the chain corresponds to 256 to 268 (YANPSAKEKASLT). Residues 269–289 (KGIAILNTSVAPMLNPFIYTL) traverse the membrane as a helical segment. The Cytoplasmic portion of the chain corresponds to 290-311 (RNQQVKQAFKNVVHKVVFYANQ).

It belongs to the G-protein coupled receptor 1 family.

The protein localises to the cell membrane. Functionally, odorant receptor. This chain is Olfactory receptor 6C3 (OR6C3), found in Homo sapiens (Human).